The chain runs to 625 residues: tRNA uridine 5-carboxymethylaminomethyl modification enzyme MnmG (625 aa).

FAD-binding positions include 10–15 (GGGHAG), Val-122, and Ser-177. An NAD(+)-binding site is contributed by 271–285 (GPRYCPSIEDKVNRF). Position 368 (Gln-368) interacts with FAD.

Belongs to the MnmG family. Homodimer. Heterotetramer of two MnmE and two MnmG subunits. FAD serves as cofactor.

It is found in the cytoplasm. NAD-binding protein involved in the addition of a carboxymethylaminomethyl (cmnm) group at the wobble position (U34) of certain tRNAs, forming tRNA-cmnm(5)s(2)U34. The polypeptide is tRNA uridine 5-carboxymethylaminomethyl modification enzyme MnmG (Wolinella succinogenes (strain ATCC 29543 / DSM 1740 / CCUG 13145 / JCM 31913 / LMG 7466 / NCTC 11488 / FDC 602W) (Vibrio succinogenes)).